We begin with the raw amino-acid sequence, 601 residues long: Tubulin polyglutamylase ttll-4 (601 aa).

Polar residues predominate over residues 1-18 (MSSGYSSAPSVSHTSSDT). The interval 1–37 (MSSGYSSAPSVSHTSSDTDLNRIDSYDDGAEETTDEQ) is disordered. A TTL domain is found at 138–476 (QARLTWCHNS…YVPPSFDKLS (339 aa)). Residues lysine 254, 260–261 (RG), 282–285 (QHYI), and 295–297 (KFD) contribute to the ATP site. Residue arginine 260 coordinates a protein. L-glutamate is bound at residue arginine 321. Position 342–343 (342–343 (TN)) interacts with ATP. L-glutamate contacts are provided by tyrosine 344, serine 345, and lysine 362. The Mg(2+) site is built by aspartate 422, glutamate 435, and asparagine 437. Lysine 453 is an L-glutamate binding site.

The protein belongs to the tubulin--tyrosine ligase family. Requires Mg(2+) as cofactor. In terms of tissue distribution, expressed in many sensory neurons in amphid.

The enzyme catalyses L-glutamyl-[protein] + L-glutamate + ATP = gamma-L-glutamyl-L-glutamyl-[protein] + ADP + phosphate + H(+). In terms of biological role, monoglutamylase which modifies tubulin, adding a single glutamate on the gamma-carboxyl group of specific glutamate residues of target proteins. Involved in the side-chain initiation step of the polyglutamylation reaction but not in the elongation step. Preferentially modifies beta-tail tubulin over the alpha-tubulin. Involved in side-chain glutamylation of tubulin in sensory cilia. Together with ttll-5 and ttll-11, required for male mating. The sequence is that of Tubulin polyglutamylase ttll-4 from Caenorhabditis elegans.